The primary structure comprises 535 residues: NAD(P)H-quinone oxidoreductase chain 4 2 (535 aa).

14 helical membrane passes run 9-29 (FPWLTTVIVYPVVAALFIPLI), 51-71 (WFALFIAVTDLLILLAGFYVG), 106-126 (LILLTAFVTTLAILAAWPVTL), 130-150 (LFYFLMLAMYGGQIGVFAVQD), 152-172 (LLFFLMWELELIPVYLLLSIW), 184-204 (FILYTALSSLFILVAGLAMAF), 227-247 (LLLYGAFLIAYGVKLPVFPLH), 258-278 (TAPVHMLLAGILLKMGGYALM), 290-310 (LYFAPVLIVLGVVNIIFAALT), 326-346 (ISHMGFVLIGIGSLTEIGMSG), 347-367 (AMLQMISHGLIGASLFFLVGA), 399-419 (LASLALPGMSGFVAELMVFIG), 432-452 (LVVVFLAAVGVILTPIYLLSM), and 479-499 (VFIIACLLIPIIGIGLYPKLV).

This sequence belongs to the complex I subunit 4 family.

The protein localises to the cellular thylakoid membrane. The catalysed reaction is a plastoquinone + NADH + (n+1) H(+)(in) = a plastoquinol + NAD(+) + n H(+)(out). It catalyses the reaction a plastoquinone + NADPH + (n+1) H(+)(in) = a plastoquinol + NADP(+) + n H(+)(out). Functionally, NDH-1 shuttles electrons from NAD(P)H, via FMN and iron-sulfur (Fe-S) centers, to quinones in the respiratory chain. The immediate electron acceptor for the enzyme in this species is believed to be plastoquinone. Couples the redox reaction to proton translocation (for every two electrons transferred, four hydrogen ions are translocated across the cytoplasmic membrane), and thus conserves the redox energy in a proton gradient. This chain is NAD(P)H-quinone oxidoreductase chain 4 2, found in Synechococcus sp. (strain JA-3-3Ab) (Cyanobacteria bacterium Yellowstone A-Prime).